Reading from the N-terminus, the 761-residue chain is Mitochondrial intermediate peptidase 1 (761 aa).

A Zn(2+)-binding site is contributed by His-530. Glu-531 is a catalytic residue. His-534 and His-537 together coordinate Zn(2+).

The protein belongs to the peptidase M3 family. The cofactor is Zn(2+).

Its subcellular location is the mitochondrion matrix. The catalysed reaction is Release of an N-terminal octapeptide as second stage of processing of some proteins imported into the mitochondrion.. Functionally, cleaves proteins, imported into the mitochondrion, to their mature size. While most mitochondrial precursor proteins are processed to the mature form in one step by mitochondrial processing peptidase (MPP), the sequential cleavage by MIP of an octapeptide after initial processing by MPP is a required step for a subgroup of nuclear-encoded precursor proteins destined for the matrix or the inner membrane. This Cryptococcus neoformans var. neoformans serotype D (strain B-3501A) (Filobasidiella neoformans) protein is Mitochondrial intermediate peptidase 1 (OCT1).